Reading from the N-terminus, the 208-residue chain is Methylthioribulose-1-phosphate dehydratase (208 aa).

Positions 101 and 103 each coordinate Zn(2+).

This sequence belongs to the aldolase class II family. MtnB subfamily. The cofactor is Zn(2+).

It catalyses the reaction 5-(methylsulfanyl)-D-ribulose 1-phosphate = 5-methylsulfanyl-2,3-dioxopentyl phosphate + H2O. It participates in amino-acid biosynthesis; L-methionine biosynthesis via salvage pathway; L-methionine from S-methyl-5-thio-alpha-D-ribose 1-phosphate: step 2/6. Functionally, catalyzes the dehydration of methylthioribulose-1-phosphate (MTRu-1-P) into 2,3-diketo-5-methylthiopentyl-1-phosphate (DK-MTP-1-P). This chain is Methylthioribulose-1-phosphate dehydratase, found in Gluconobacter oxydans (strain 621H) (Gluconobacter suboxydans).